A 354-amino-acid polypeptide reads, in one-letter code: Fructose-bisphosphate aldolase (354 aa).

Residue serine 50 coordinates D-glyceraldehyde 3-phosphate. Aspartate 83 (proton donor) is an active-site residue. 4 residues coordinate Zn(2+): histidine 84, aspartate 105, glutamate 142, and histidine 198. Glycine 199 lines the dihydroxyacetone phosphate pocket. Histidine 232 lines the Zn(2+) pocket. Residues 233–235 and 275–278 each bind dihydroxyacetone phosphate; these read GSS and NIDT.

It belongs to the class II fructose-bisphosphate aldolase family. As to quaternary structure, homodimer. It depends on Zn(2+) as a cofactor.

The catalysed reaction is beta-D-fructose 1,6-bisphosphate = D-glyceraldehyde 3-phosphate + dihydroxyacetone phosphate. Its pathway is carbohydrate biosynthesis; Calvin cycle. It functions in the pathway carbohydrate degradation; glycolysis; D-glyceraldehyde 3-phosphate and glycerone phosphate from D-glucose: step 4/4. With respect to regulation, activity is stimulated by Fe(2+) in autotrophically grown cells. Catalyzes the aldol condensation of dihydroxyacetone phosphate (DHAP or glycerone-phosphate) with glyceraldehyde 3-phosphate (G3P) to form fructose 1,6-bisphosphate (FBP) in gluconeogenesis and the reverse reaction in glycolysis. The polypeptide is Fructose-bisphosphate aldolase (Xanthobacter flavus).